The chain runs to 72 residues: Translation initiation factor IF-1 (72 aa).

The S1-like domain maps to 1-72; sequence MAKDDVIEVE…TRGRITYRYK (72 aa). Residue Y60 is modified to Phosphotyrosine.

Belongs to the IF-1 family. As to quaternary structure, component of the 30S ribosomal translation pre-initiation complex which assembles on the 30S ribosome in the order IF-2 and IF-3, IF-1 and N-formylmethionyl-tRNA(fMet); mRNA recruitment can occur at any time during PIC assembly.

It localises to the cytoplasm. One of the essential components for the initiation of protein synthesis. Stabilizes the binding of IF-2 and IF-3 on the 30S subunit to which N-formylmethionyl-tRNA(fMet) subsequently binds. Helps modulate mRNA selection, yielding the 30S pre-initiation complex (PIC). Upon addition of the 50S ribosomal subunit IF-1, IF-2 and IF-3 are released leaving the mature 70S translation initiation complex. The polypeptide is Translation initiation factor IF-1 (Geobacillus kaustophilus (strain HTA426)).